Here is a 238-residue protein sequence, read N- to C-terminus: Ribosomal RNA small subunit methyltransferase G (238 aa).

Residues Gly78, Phe83, 129–130, and Arg148 each bind S-adenosyl-L-methionine; that span reads AE. The disordered stretch occupies residues 216-238; sequence EKKKETPKKYPRKAGTPAKNPIK.

Belongs to the methyltransferase superfamily. RNA methyltransferase RsmG family.

It is found in the cytoplasm. Its function is as follows. Specifically methylates the N7 position of a guanine in 16S rRNA. In Lactococcus lactis subsp. lactis (strain IL1403) (Streptococcus lactis), this protein is Ribosomal RNA small subunit methyltransferase G.